The chain runs to 200 residues: Imidazoleglycerol-phosphate dehydratase (200 aa).

It belongs to the imidazoleglycerol-phosphate dehydratase family.

It localises to the cytoplasm. The catalysed reaction is D-erythro-1-(imidazol-4-yl)glycerol 3-phosphate = 3-(imidazol-4-yl)-2-oxopropyl phosphate + H2O. Its pathway is amino-acid biosynthesis; L-histidine biosynthesis; L-histidine from 5-phospho-alpha-D-ribose 1-diphosphate: step 6/9. This is Imidazoleglycerol-phosphate dehydratase from Prosthecochloris aestuarii (strain DSM 271 / SK 413).